A 515-amino-acid chain; its full sequence is 2-isopropylmalate synthase (515 aa).

A Pyruvate carboxyltransferase domain is found at 5 to 268 (LIIFDTTLRD…DLGIDTTQIV (264 aa)). Residues Asp14, His202, His204, and Asn239 each contribute to the Mn(2+) site. The segment at 396-515 (KFVSLAQRSE…NADKLNPQRA (120 aa)) is regulatory domain.

It belongs to the alpha-IPM synthase/homocitrate synthase family. LeuA type 1 subfamily. Homodimer. The cofactor is Mn(2+).

It is found in the cytoplasm. The catalysed reaction is 3-methyl-2-oxobutanoate + acetyl-CoA + H2O = (2S)-2-isopropylmalate + CoA + H(+). It participates in amino-acid biosynthesis; L-leucine biosynthesis; L-leucine from 3-methyl-2-oxobutanoate: step 1/4. Functionally, catalyzes the condensation of the acetyl group of acetyl-CoA with 3-methyl-2-oxobutanoate (2-ketoisovalerate) to form 3-carboxy-3-hydroxy-4-methylpentanoate (2-isopropylmalate). This chain is 2-isopropylmalate synthase, found in Burkholderia pseudomallei (strain 1106a).